Here is a 225-residue protein sequence, read N- to C-terminus: Dehydrin DHN4 (225 aa).

The interval 1 to 78 (MEYQGQQHGR…EDDGMGGRRK (78 aa)) is disordered. Residues 21-39 (HGVGTGMGTHGGVGTGAAA) are compositionally biased toward gly residues. 5 tandem repeats follow at residues 105–118 (YGQQ…TGGT), 119–136 (YGQQ…TDGT), 137–159 (YGQQ…TGGT), 160–178 (YGQQ…GTGG), and 179–199 (TYGQ…TGGT). The segment at 105–199 (YGQQGTGMAG…GTGMHGTGGT (95 aa)) is 5 X approximate tandem repeats.

Belongs to the plant dehydrin family.

The protein is Dehydrin DHN4 (DHN4) of Hordeum vulgare (Barley).